Here is a 277-residue protein sequence, read N- to C-terminus: Indole-3-glycerol phosphate synthase (277 aa).

This sequence belongs to the TrpC family.

It catalyses the reaction 1-(2-carboxyphenylamino)-1-deoxy-D-ribulose 5-phosphate + H(+) = (1S,2R)-1-C-(indol-3-yl)glycerol 3-phosphate + CO2 + H2O. It participates in amino-acid biosynthesis; L-tryptophan biosynthesis; L-tryptophan from chorismate: step 4/5. This is Indole-3-glycerol phosphate synthase from Pseudomonas putida (strain ATCC 47054 / DSM 6125 / CFBP 8728 / NCIMB 11950 / KT2440).